Here is a 284-residue protein sequence, read N- to C-terminus: Pantothenate synthetase (284 aa).

Residue 30–37 participates in ATP binding; sequence MGNLHEGH. The Proton donor role is filled by histidine 37. Glutamine 61 serves as a coordination point for (R)-pantoate. Glutamine 61 contributes to the beta-alanine binding site. 149–152 provides a ligand contact to ATP; it reads GEKD. Residue glutamine 155 participates in (R)-pantoate binding. Residues valine 178 and 186–189 contribute to the ATP site; that span reads LSSR.

Belongs to the pantothenate synthetase family. Homodimer.

It is found in the cytoplasm. The catalysed reaction is (R)-pantoate + beta-alanine + ATP = (R)-pantothenate + AMP + diphosphate + H(+). It participates in cofactor biosynthesis; (R)-pantothenate biosynthesis; (R)-pantothenate from (R)-pantoate and beta-alanine: step 1/1. Functionally, catalyzes the condensation of pantoate with beta-alanine in an ATP-dependent reaction via a pantoyl-adenylate intermediate. This Yersinia enterocolitica serotype O:8 / biotype 1B (strain NCTC 13174 / 8081) protein is Pantothenate synthetase.